Here is a 215-residue protein sequence, read N- to C-terminus: Pyrophosphatase PpaX (215 aa).

Residue aspartate 9 is the Nucleophile of the active site.

Belongs to the HAD-like hydrolase superfamily. PpaX family. Mg(2+) is required as a cofactor.

The enzyme catalyses diphosphate + H2O = 2 phosphate + H(+). In terms of biological role, hydrolyzes pyrophosphate formed during P-Ser-HPr dephosphorylation by HPrK/P. Might play a role in controlling the intracellular pyrophosphate pool. The chain is Pyrophosphatase PpaX from Anoxybacillus flavithermus (strain DSM 21510 / WK1).